Here is a 383-residue protein sequence, read N- to C-terminus: Putative type I specificity subunit S.MgeORF438P (383 aa).

The interval 1-142 (MTPKLKLNNN…KELEIPFTSN (142 aa)) is TRD1. Residues 143 to 182 (KNEQHAIANTLSVFDERLENLASLIEINRKLRDEYAHKLF) form a conserved region 1 region. A coiled-coil region spans residues 143-182 (KNEQHAIANTLSVFDERLENLASLIEINRKLRDEYAHKLF). Positions 183–330 (SLDEAFLSHW…GEIKVPYVKS (148 aa)) are TRD2. Positions 331-370 (FQLQRKAGKIVFLLDQKLDQYKKELSSLTVIRDTLLKKLF) are conserved region 2. Positions 331 to 370 (FQLQRKAGKIVFLLDQKLDQYKKELSSLTVIRDTLLKKLF) form a coiled coil.

It belongs to the type-I restriction system S methylase family.

In terms of biological role, the specificity (S) subunit of a type I restriction enzyme; this subunit dictates DNA sequence specificity. This bacterium does not encode the associated endonuclease or methylase subunits. The chain is Putative type I specificity subunit S.MgeORF438P from Mycoplasma genitalium (strain ATCC 33530 / DSM 19775 / NCTC 10195 / G37) (Mycoplasmoides genitalium).